A 360-amino-acid chain; its full sequence is ACT1-like protein (360 aa).

Positions 339–360 (KKQSHNNANDHHEDSMNYSITQ) are disordered.

In terms of assembly, interacts with the receptor complex composed of ilcr-1 and ilcr-2. Also interacts with pik-1. As to expression, expressed in neurons.

In terms of biological role, may act as an adapter to facilitate downstream signaling for the receptor complex composed of ilcr-1 and ilcr-2, which is a signaling complex that modulates neuronal activity and animal behavior in response to sensory neuron input. The protein is ACT1-like protein of Caenorhabditis elegans.